Reading from the N-terminus, the 397-residue chain is Homeobox protein knotted-1-like 2 (397 aa).

Disordered regions lie at residues 43-68 (TFHLQSSGGGGGGGSGDQCNFQSPGT), 172-191 (FEARQRSSGTSRETSKDPEL), and 233-276 (NNNA…PRAE). The span at 49–58 (SGGGGGGGSG) shows a compositional bias: gly residues. The ELK domain maps to 279–299 (ELKNHLLRKYSGYLSSLKQEL). Residues 300-363 (SKKKKKGKLP…NQRKRHWKPS (64 aa)) constitute a DNA-binding region (homeobox; TALE-type).

Belongs to the TALE/KNOX homeobox family. As to expression, expressed only in the stems.

It localises to the nucleus. Probably binds to the DNA sequence 5'-TGAC-3'. The polypeptide is Homeobox protein knotted-1-like 2 (Malus domestica (Apple)).